The following is an 89-amino-acid chain: Dynein light chain 1, cytoplasmic (89 aa).

The protein belongs to the dynein light chain family. Interacts with spn-F. Forms ternary complexes with spn-F and IKKepsilon. In terms of tissue distribution, ubiquitous.

Its subcellular location is the cytoplasm. The protein localises to the cytoskeleton. In terms of biological role, acts as a non-catalytic accessory component of a dynein complex. This Drosophila melanogaster (Fruit fly) protein is Dynein light chain 1, cytoplasmic (ctp).